Here is a 196-residue protein sequence, read N- to C-terminus: Glycerol-3-phosphate acyltransferase (196 aa).

Helical transmembrane passes span 4-24, 56-76, 80-100, 114-134, and 155-175; these read LTLTMIIAAYLIGSISSAILV, ATVLFLDILKGTIPVWGAYFL, SLYLGFIGVSACLGHMYPIFF, TLLPIGFTLGGLLILTWVLVV, and VYFLKPLYVYPTLMLSALILF.

It belongs to the PlsY family. As to quaternary structure, probably interacts with PlsX.

The protein localises to the cell inner membrane. It carries out the reaction an acyl phosphate + sn-glycerol 3-phosphate = a 1-acyl-sn-glycero-3-phosphate + phosphate. It participates in lipid metabolism; phospholipid metabolism. Its function is as follows. Catalyzes the transfer of an acyl group from acyl-phosphate (acyl-PO(4)) to glycerol-3-phosphate (G3P) to form lysophosphatidic acid (LPA). This enzyme utilizes acyl-phosphate as fatty acyl donor, but not acyl-CoA or acyl-ACP. The chain is Glycerol-3-phosphate acyltransferase from Colwellia psychrerythraea (strain 34H / ATCC BAA-681) (Vibrio psychroerythus).